The sequence spans 538 residues: Metal transporter Nramp5 (538 aa).

Transmembrane regions (helical) follow at residues 44–64 (FLAHVGPGFMVSLAYLDPGNL), 77–97 (ELLWVILIGLIFALIIQSLAA), 118–138 (FVKIFLWLLAELAVIAADIPE), 140–160 (IGTAFAFNILFHIPVWVGVLI), 181–201 (FLISMLVFVMAACFFGELSIV), 227–247 (IALLGALVMPHNLFLHSALVL), 264–284 (FFLYESGFALFVALLINIAVV), 324–346 (SAIVYGVALLASGQSSTITGTYA), 365–385 (NLMTRTIAIAPSLIVSIIGGS), 391–411 (LIIIASMILSFELPFALIPLL), 427–447 (IYIIVFSWFLGLLIIGINMYF), and 467–487 (VLVGAAVFPFMLVYIVAVVYL). The disordered stretch occupies residues 518 to 538 (AVDDDEPLPYRDDLADIPLPR).

The protein belongs to the NRAMP (TC 2.A.55) family.

It localises to the membrane. In terms of biological role, probable metal transporter. This Oryza sativa subsp. japonica (Rice) protein is Metal transporter Nramp5 (NRAMP5).